We begin with the raw amino-acid sequence, 303 residues long: Glucosyl-3-phosphoglycerate synthase (303 aa).

UDP-alpha-D-glucose is bound by residues 35–39 (PALNE), Ser-66, Lys-99, and 119–120 (DS). A Mn(2+)-binding site is contributed by Asp-121. 166-169 (GRVT) contributes to the (2R)-3-phosphoglycerate binding site. UDP-alpha-D-glucose contacts are provided by residues 211-214 (YGVE) and 238-243 (RAHRNR). A Mn(2+)-binding site is contributed by His-240. Residue Asn-242 participates in (2R)-3-phosphoglycerate binding.

Belongs to the glycosyltransferase 2 family. As to quaternary structure, homotrimer. Mg(2+) is required as a cofactor. It depends on Mn(2+) as a cofactor.

The enzyme catalyses an NDP-alpha-D-glucose + (2R)-3-phosphoglycerate = (2R)-2-O-(alpha-D-glucopyranosyl)-3-phospho-glycerate + a ribonucleoside 5'-diphosphate + H(+). It catalyses the reaction (2R)-3-phosphoglycerate + UDP-alpha-D-glucose = (2R)-2-O-(alpha-D-glucopyranosyl)-3-phospho-glycerate + UDP + H(+). The catalysed reaction is ADP-alpha-D-glucose + (2R)-3-phosphoglycerate = (2R)-2-O-(alpha-D-glucopyranosyl)-3-phospho-glycerate + ADP + H(+). It carries out the reaction GDP-D-glucose + (2R)-3-phosphoglycerate = (2R)-2-O-(alpha-D-glucopyranosyl)-3-phospho-glycerate + GDP + H(+). In terms of biological role, involved in the biosynthesis of 6-O-methylglucose lipopolysaccarides (MGLPs). Catalyzes the transfer of the glucose moiety from a nuleotide sugar such as UDP-alpha-D-glucose to the position 2 of 3-phospho-D-glycerate (3-PGA) to form glucosyl-3-phosphoglycerate (GPG). It can use UDP-glucose, ADP-glucose and GDP-glucose as sugar donor substrates with decreasing affinity and with 3-PGA as an acceptor. D-glycerate can only be an acceptor with ADP-glucose and at a very low rate. In Mycolicibacterium smegmatis (strain ATCC 700084 / mc(2)155) (Mycobacterium smegmatis), this protein is Glucosyl-3-phosphoglycerate synthase (gpgS).